The sequence spans 21 residues: Sarafotoxin-D (21 aa).

2 disulfide bridges follow: C1–C15 and C3–C11.

This sequence belongs to the endothelin/sarafotoxin family. Expressed by the venom gland.

It is found in the secreted. In terms of biological role, vasoconstrictor activity. These toxins cause cardiac arrest probably as a result of coronary vasospasm. May act by displaying agonistic activities towards endothelin-1 and -2 receptors (EDNRA and EDNRB). This Atractaspis engaddensis (Israeli burrowing asp) protein is Sarafotoxin-D.